The sequence spans 602 residues: Cholinesterase (602 aa).

The signal sequence occupies residues 1 to 28 (MQSKGTIISIQFLLRFLLLWVLIGKSHT). The N-linked (GlcNAc...) asparagine glycan is linked to N85. Cysteines 93 and 120 form a disulfide. An N-linked (GlcNAc...) asparagine glycan is attached at N134. 144-145 (GG) is a substrate binding site. S226 acts as the Acyl-ester intermediate in catalysis. S226 carries the post-translational modification Phosphoserine. 2 N-linked (GlcNAc...) asparagine glycosylation sites follow: N269 and N284. C280 and C291 are oxidised to a cystine. Residue E353 is the Charge relay system of the active site. N369 carries N-linked (GlcNAc...) asparagine glycosylation. C428 and C547 are disulfide-bonded. H466 acts as the Charge relay system in catalysis. N-linked (GlcNAc...) asparagine glycosylation is found at N483, N509, N513, and N514.

This sequence belongs to the type-B carboxylesterase/lipase family. Homotetramer; disulfide-linked. Dimer of dimers.

It localises to the secreted. The enzyme catalyses an acylcholine + H2O = a carboxylate + choline + H(+). Functionally, esterase with broad substrate specificity. Contributes to the inactivation of the neurotransmitter acetylcholine. Can degrade neurotoxic organophosphate esters. The sequence is that of Cholinesterase (BCHE) from Panthera tigris tigris (Bengal tiger).